The chain runs to 120 residues: UPF0231 protein YacL (120 aa).

The protein belongs to the UPF0231 family.

This chain is UPF0231 protein YacL, found in Escherichia fergusonii (strain ATCC 35469 / DSM 13698 / CCUG 18766 / IAM 14443 / JCM 21226 / LMG 7866 / NBRC 102419 / NCTC 12128 / CDC 0568-73).